A 176-amino-acid chain; its full sequence is Macro domain-containing protein mll7730 (176 aa).

Residues 1–174 (MSKALDRIRI…LYLRAVAALR (174 aa)) enclose the Macro domain.

The protein belongs to the MacroD-type family.

This chain is Macro domain-containing protein mll7730, found in Mesorhizobium japonicum (strain LMG 29417 / CECT 9101 / MAFF 303099) (Mesorhizobium loti (strain MAFF 303099)).